The chain runs to 191 residues: NAD(P)H-quinone oxidoreductase subunit 6, chloroplastic (191 aa).

5 helical membrane passes run 10–30, 32–52, 61–81, 89–109, and 153–173; these read TIFL…ILLT, IVYS…LYLL, AQIL…VMLI, FFVY…SIFL, and FLLP…GAIT.

Belongs to the complex I subunit 6 family. NDH is composed of at least 16 different subunits, 5 of which are encoded in the nucleus.

It localises to the plastid. The protein localises to the chloroplast thylakoid membrane. It catalyses the reaction a plastoquinone + NADH + (n+1) H(+)(in) = a plastoquinol + NAD(+) + n H(+)(out). The enzyme catalyses a plastoquinone + NADPH + (n+1) H(+)(in) = a plastoquinol + NADP(+) + n H(+)(out). Its function is as follows. NDH shuttles electrons from NAD(P)H:plastoquinone, via FMN and iron-sulfur (Fe-S) centers, to quinones in the photosynthetic chain and possibly in a chloroplast respiratory chain. The immediate electron acceptor for the enzyme in this species is believed to be plastoquinone. Couples the redox reaction to proton translocation, and thus conserves the redox energy in a proton gradient. The sequence is that of NAD(P)H-quinone oxidoreductase subunit 6, chloroplastic (ndhG) from Marchantia polymorpha (Common liverwort).